Reading from the N-terminus, the 130-residue chain is Methylglyoxal synthase (130 aa).

The MGS-like domain maps to 1 to 130; the sequence is MSKPRIALIA…DLARTMQDVC (130 aa). Substrate is bound by residues His11, Lys15, 37–40, and 57–58; these read TGTT and SG. The Proton donor/acceptor role is filled by Asp63. His90 provides a ligand contact to substrate.

This sequence belongs to the methylglyoxal synthase family.

It carries out the reaction dihydroxyacetone phosphate = methylglyoxal + phosphate. Its function is as follows. Catalyzes the formation of methylglyoxal from dihydroxyacetone phosphate. In Burkholderia multivorans (strain ATCC 17616 / 249), this protein is Methylglyoxal synthase.